Reading from the N-terminus, the 615-residue chain is Elongation factor 4 (615 aa).

The tr-type G domain maps to 17–198 (ASIRNFCIIA…RVSRTIPAPV (182 aa)). GTP-binding positions include 29–34 (DHGKST) and 145–148 (NKID).

Belongs to the TRAFAC class translation factor GTPase superfamily. Classic translation factor GTPase family. LepA subfamily.

Its subcellular location is the cell membrane. It catalyses the reaction GTP + H2O = GDP + phosphate + H(+). Functionally, required for accurate and efficient protein synthesis under certain stress conditions. May act as a fidelity factor of the translation reaction, by catalyzing a one-codon backward translocation of tRNAs on improperly translocated ribosomes. Back-translocation proceeds from a post-translocation (POST) complex to a pre-translocation (PRE) complex, thus giving elongation factor G a second chance to translocate the tRNAs correctly. Binds to ribosomes in a GTP-dependent manner. The polypeptide is Elongation factor 4 (Clavibacter sepedonicus (Clavibacter michiganensis subsp. sepedonicus)).